The primary structure comprises 546 residues: Calcitonin receptor-like protein 1 (546 aa).

Residues 1–171 (MADATSPFNV…EVARNARKLE (171 aa)) lie on the Cytoplasmic side of the membrane. Residues 172–192 (FVGLGLSLVSLILAISIFSYF) form a helical membrane-spanning segment. Topologically, residues 193–205 (RRLRVFRNLLHLH) are extracellular. A helical membrane pass occupies residues 206–226 (LMIAMLMVVILRLVLYIDLIF). The Cytoplasmic segment spans residues 227–251 (TGENGPHTNSAEGKTINTMPIVCEG). Residues 252 to 272 (MFFFLEYFKTVTFCWMFLEGI) traverse the membrane as a helical segment. Residues 273–292 (YLNNQIVFGFFNSEPKLLPY) are Extracellular-facing. A helical transmembrane segment spans residues 293–313 (FIAGYGIPLVHTMLWLLVVLI). The Cytoplasmic segment spans residues 314-333 (KKDFKVERCLGSYYLEPEFW). Residues 334–354 (ILDGPRMAELVINLFFICNVI) form a helical membrane-spanning segment. The Extracellular segment spans residues 355-377 (RVLYSKVRESNNTSEAGLKKSVK). N-linked (GlcNAc...) asparagine glycosylation is found at Asn-365 and Asn-366. Residues 378 to 398 (AAMMLLPLLGVPNIMQTIPFA) traverse the membrane as a helical segment. Residues 399–403 (PTRDN) are Cytoplasmic-facing. The chain crosses the membrane as a helical span at residues 404 to 424 (IMVFAVWTYTASFTYMYQGLM). At 425-546 (VASIYCFTNK…EGSNRSTKSP (122 aa)) the chain is on the extracellular side. Residues Asn-472 and Asn-476 are each glycosylated (N-linked (GlcNAc...) asparagine). A disordered region spans residues 472–546 (NGTANASAPQ…EGSNRSTKSP (75 aa)). A compositionally biased stretch (polar residues) spans 473-485 (GTANASAPQTNNA). A compositionally biased stretch (basic and acidic residues) spans 500 to 520 (KGSDDSTTKLMKDAVMEEEKN). The N-linked (GlcNAc...) asparagine glycan is linked to Asn-540.

Belongs to the G-protein coupled receptor 2 family. Expression was observed in the mechanosensory neuron pairs PLM, ALM, FLP, OLQD, and OLQV, the chemosensory neurons PHA, PHB, RMEV, the ring motor neurons RMED, and the pharyngeal interneuron pair I1. Expression in sensory neurons PHA, PQR and URY are responsible for mate searching behavior. Expressed in AIY, RIM, RIA, and other neurons.

The protein localises to the cell membrane. Functionally, G-protein coupled receptor for PDF neuropeptides. Plays a role in responses to environmental signals, including chemicals and touch, and in modulating locomotory behaviors. Capable of transducing signals via an adenylate cyclase acy-1 cAMP-dependent pathway. Required to regulate the sex-specific expression of TGFbeta-like daf-7 in the ASJ chemosensory neurons, perhaps acting via acy-1. Involved in modulating mate searching behavior independent of nutritional status. In the presence of food, plays a role in initiating and extending exploratory roaming behavior, perhaps acting in AIY, RIM, RIA, and other neurons, in opposition to 5-hydroxytryptamine (serotonin) signaling. Involved in mediating arousal from the sleep-like state called lethargus, which occurs during molting between larval and adult stages, in part by regulating touch sensitivity. May play a role in circadian rhythms of locomotor activity. Its function is as follows. G-protein coupled receptor which is activated by neuropeptides PDF-1 and PDF-2. Probably acts through the G-alpha(s) type of G proteins to elevate cAMP levels. G-protein coupled receptor which is activated by neuropeptides PDF-1 and PDF-2; however, activation is lower compared to isoforms a and b. Probably inhibits cAMP levels through the G-alpha(i/o) type of G proteins. This chain is Calcitonin receptor-like protein 1 (pdfr-1), found in Caenorhabditis elegans.